We begin with the raw amino-acid sequence, 99 residues long: Cysteine-rich C-terminal protein 1 (99 aa).

2 disordered regions span residues Met-1 to Ser-42 and Arg-65 to Cys-99. Residues Ala-22–Ala-32 are compositionally biased toward pro residues. Over residues Gln-83–Cys-99 the composition is skewed to low complexity.

The protein is Cysteine-rich C-terminal protein 1 (CRCT1) of Homo sapiens (Human).